The primary structure comprises 211 residues: MVCDIYDALPVEIWIHIIELSKEFNLLLTNTKFIKLYYLVKTHKSILKKIVKNGYFENLKYIIENRIIVITNINDVLLLACKYGNLPIVKYLVSKGADICAEQNSPIKNATYYGHLDVVKYLVSNGAKFFGSYSSAIIIASSSGKLDIVKYFVPGKIYFCLEMEIALVCATENKHTNIVDYLNSMRSSYFDKCFNFIACLVKNFLPSIYVY.

5 ANK repeats span residues 31–61, 72–101, 103–131, 133–162, and 163–191; these read TKFIKLYYLVKTHKSILKKIVKNGYFENLKY, NINDVLLLACKYGNLPIVKYLVSKGADICA, QNSPIKNATYYGHLDVVKYLVSNGAKFFG, YSSAIIIASSSGKLDIVKYFVPGKIYFCLE, and MEIALVCATENKHTNIVDYLNSMRSSYFD.

In Acanthamoeba polyphaga mimivirus (APMV), this protein is Putative ankyrin repeat protein R810.